Reading from the N-terminus, the 458-residue chain is tRNA modification GTPase MnmE (458 aa).

(6S)-5-formyl-5,6,7,8-tetrahydrofolate-binding residues include arginine 30, glutamate 90, and lysine 129. Residues 225–379 (GLSICLIGCP…LHQTIDTIIW (155 aa)) enclose the TrmE-type G domain. Residue asparagine 235 participates in K(+) binding. GTP-binding positions include 235 to 240 (NVGKSS), 254 to 260 (SPIPGTT), and 279 to 282 (DTAG). Serine 239 provides a ligand contact to Mg(2+). K(+) is bound by residues serine 254, isoleucine 256, and threonine 259. Threonine 260 is a binding site for Mg(2+). Lysine 458 contacts (6S)-5-formyl-5,6,7,8-tetrahydrofolate.

It belongs to the TRAFAC class TrmE-Era-EngA-EngB-Septin-like GTPase superfamily. TrmE GTPase family. As to quaternary structure, homodimer. Heterotetramer of two MnmE and two MnmG subunits. K(+) is required as a cofactor.

It localises to the cytoplasm. In terms of biological role, exhibits a very high intrinsic GTPase hydrolysis rate. Involved in the addition of a carboxymethylaminomethyl (cmnm) group at the wobble position (U34) of certain tRNAs, forming tRNA-cmnm(5)s(2)U34. This is tRNA modification GTPase MnmE from Protochlamydia amoebophila (strain UWE25).